We begin with the raw amino-acid sequence, 325 residues long: D-alanine--D-alanine ligase (325 aa).

Positions 107–311 (KRLLLSESLP…YEALCVEVLK (205 aa)) constitute an ATP-grasp domain. Residue 137–192 (VDTLGLPLIVKPAREGSSLGLSKVTERAAMAAAVALAEKMDADILCEQFISGDEVT) coordinates ATP. Mg(2+)-binding residues include Asp-264, Glu-278, and Asn-280.

This sequence belongs to the D-alanine--D-alanine ligase family. The cofactor is Mg(2+). It depends on Mn(2+) as a cofactor.

It localises to the cytoplasm. It catalyses the reaction 2 D-alanine + ATP = D-alanyl-D-alanine + ADP + phosphate + H(+). Its pathway is cell wall biogenesis; peptidoglycan biosynthesis. Cell wall formation. In Polaromonas naphthalenivorans (strain CJ2), this protein is D-alanine--D-alanine ligase.